The primary structure comprises 425 residues: Enolase (425 aa).

Position 162 (Gln-162) interacts with (2R)-2-phosphoglycerate. Glu-204 functions as the Proton donor in the catalytic mechanism. The Mg(2+) site is built by Asp-241, Glu-284, and Asp-311. (2R)-2-phosphoglycerate contacts are provided by Lys-336, Arg-365, Ser-366, and Lys-387. The Proton acceptor role is filled by Lys-336.

This sequence belongs to the enolase family. Mg(2+) serves as cofactor.

The protein localises to the cytoplasm. It localises to the secreted. It is found in the cell surface. The enzyme catalyses (2R)-2-phosphoglycerate = phosphoenolpyruvate + H2O. It participates in carbohydrate degradation; glycolysis; pyruvate from D-glyceraldehyde 3-phosphate: step 4/5. Functionally, catalyzes the reversible conversion of 2-phosphoglycerate (2-PG) into phosphoenolpyruvate (PEP). It is essential for the degradation of carbohydrates via glycolysis. The chain is Enolase from Brucella abortus (strain S19).